Consider the following 2167-residue polypeptide: Papilin (2167 aa).

Residues 1–19 (MRLLLFSAALLLCSVPTWA) form the signal peptide. Residues 76–123 (TGNWGPWVPENECSRSCGGGVQLEKRQCSGDCTGASVRYISCNLNACE) form the TSP type-1 1 domain. Cystine bridges form between Cys-88–Cys-117, Cys-92–Cys-122, and Cys-103–Cys-107. Asn-268 carries N-linked (GlcNAc...) asparagine glycosylation. TSP type-1 domains follow at residues 341 to 402 (VDYM…VDCE), 404 to 459 (EWFT…TCNR), and 461 to 525 (ACPE…GPCE). 3 disulfides stabilise this stretch: Cys-353–Cys-396, Cys-357–Cys-401, and Cys-368–Cys-382. 2 N-linked (GlcNAc...) asparagine glycosylation sites follow: Asn-386 and Asn-445. Residues Asn-541, Asn-568, and Asn-638 are each glycosylated (N-linked (GlcNAc...) asparagine). TSP type-1 domains are found at residues 585 to 643 (CEYE…TNEE) and 645 to 702 (CTGT…DDCP). N-linked (GlcNAc...) asparagine glycosylation is found at Asn-715, Asn-729, Asn-741, Asn-814, Asn-820, Asn-857, Asn-933, and Asn-1090. 6 cysteine pairs are disulfide-bonded: Cys-1089–Cys-1141, Cys-1099–Cys-1124, Cys-1116–Cys-1137, Cys-1150–Cys-1202, Cys-1161–Cys-1185, and Cys-1177–Cys-1198. 2 BPTI/Kunitz inhibitor domains span residues 1089 to 1141 (CNQT…ETIC) and 1150 to 1202 (CYLP…SMFC). The tract at residues 1239-1273 (QSAEQPQPQQPQQQQQQQQQQPQQPRQSMEDICRS) is disordered. Positions 1243-1263 (QPQPQQPQQQQQQQQQQPQQP) are enriched in low complexity. Disulfide bonds link Cys-1271/Cys-1321, Cys-1280/Cys-1304, and Cys-1296/Cys-1317. In terms of domain architecture, BPTI/Kunitz inhibitor 3 spans 1271–1321 (CRSRQDAGPCETYSDQWFYNAFSQECETFTYGGCGGNLNRFRSKDECEQRC). Residues 1332-1365 (ARQEQAQPAAQPAQPAQPSNIVSPPQQSASPVVV) are disordered. Cystine bridges form between Cys-1375-Cys-1425, Cys-1384-Cys-1408, Cys-1400-Cys-1421, Cys-1447-Cys-1497, Cys-1456-Cys-1480, Cys-1472-Cys-1493, Cys-1504-Cys-1554, Cys-1513-Cys-1537, and Cys-1529-Cys-1550. BPTI/Kunitz inhibitor domains are found at residues 1375 to 1425 (CHLN…ESLC), 1447 to 1497 (CDEA…KAAC), and 1504 to 1554 (CQLP…QARC). The segment at 1556-1615 (KDDQTTTTSQPEELPSLPLVQEDPQPRPAFSLKQSFAHSRRRDAPFARSVSARHHTPDSE) is disordered. 9 cysteine pairs are disulfide-bonded: Cys-1621-Cys-1671, Cys-1630-Cys-1654, Cys-1646-Cys-1667, Cys-1731-Cys-1781, Cys-1740-Cys-1764, Cys-1756-Cys-1777, Cys-1790-Cys-1840, Cys-1799-Cys-1823, and Cys-1815-Cys-1836. 3 BPTI/Kunitz inhibitor domains span residues 1621–1671 (CYAV…ETSC), 1731–1781 (CMLP…ERAC), and 1790–1840 (CELP…ESLC). N-linked (GlcNAc...) asparagine glycosylation is present at Asn-1848. Intrachain disulfides connect Cys-1853–Cys-1903, Cys-1862–Cys-1886, Cys-1878–Cys-1899, Cys-1914–Cys-1964, Cys-1923–Cys-1947, and Cys-1939–Cys-1960. BPTI/Kunitz inhibitor domains follow at residues 1853-1903 (CTLE…QQSC) and 1914-1964 (CTLR…FRRC). N-linked (GlcNAc...) asparagine glycosylation is found at Asn-1992, Asn-2087, and Asn-2133. Residues 2075-2106 (RTTSRPMLTPSKNFSLGTPPTPSPSTVSTTPF) form a disordered region. Positions 2078–2090 (SRPMLTPSKNFSL) are enriched in polar residues. The region spanning 2124-2163 (TSNSCMDVGNASTCDLIVKNGLCGKKRYGTFCCHTCTRVH) is the PLAC domain.

The protein belongs to the papilin family. As to expression, localizes to the basement membranes of the gonad primordium, pharynx and intestine (at protein level). Expressed in head and CAN neurons, coelomocytes, body-wall muscles and anal depressor and sphincter and stomatointestinal muscles. Expressed Isoform a: is expressed in body wall muscles and distal cell tips. Isoform b: expressed in embryonic muscles.

The protein resides in the secreted. Its subcellular location is the extracellular space. The protein localises to the extracellular matrix. It localises to the basement membrane. Involved in pharynx morphogenesis probably by remodeling the basement membrane. Its function is as follows. Plays a role in embryogenesis, the second phase of distal cell tip migration and is required for distribution of the metalloproteinase, mig-17, during organogenesis. In terms of biological role, plays a role in post embryonic distal cell tip migration. Essential extracellular matrix (ECM) protein required for hypodermal enclosure in the embryo. The sequence is that of Papilin (mig-6) from Caenorhabditis elegans.